Consider the following 392-residue polypeptide: 8-amino-7-oxononanoate synthase (392 aa).

Arg-18 contacts substrate. Pyridoxal 5'-phosphate is bound at residue 105–106 (GY). His-130 contacts substrate. Pyridoxal 5'-phosphate-binding residues include Ser-177, His-205, and Thr-234. Lys-237 is subject to N6-(pyridoxal phosphate)lysine. Residue Thr-351 participates in substrate binding.

This sequence belongs to the class-II pyridoxal-phosphate-dependent aminotransferase family. BioF subfamily. In terms of assembly, homodimer. The cofactor is pyridoxal 5'-phosphate.

The enzyme catalyses 6-carboxyhexanoyl-[ACP] + L-alanine + H(+) = (8S)-8-amino-7-oxononanoate + holo-[ACP] + CO2. Its pathway is cofactor biosynthesis; biotin biosynthesis. Catalyzes the decarboxylative condensation of pimeloyl-[acyl-carrier protein] and L-alanine to produce 8-amino-7-oxononanoate (AON), [acyl-carrier protein], and carbon dioxide. The protein is 8-amino-7-oxononanoate synthase of Thioalkalivibrio sulfidiphilus (strain HL-EbGR7).